The chain runs to 265 residues: Thiazole synthase (265 aa).

Catalysis depends on lysine 103, which acts as the Schiff-base intermediate with DXP. 1-deoxy-D-xylulose 5-phosphate is bound by residues glycine 164, 190–191 (AG), and 212–213 (NT).

Belongs to the ThiG family. As to quaternary structure, homotetramer. Forms heterodimers with either ThiH or ThiS.

It is found in the cytoplasm. The enzyme catalyses [ThiS sulfur-carrier protein]-C-terminal-Gly-aminoethanethioate + 2-iminoacetate + 1-deoxy-D-xylulose 5-phosphate = [ThiS sulfur-carrier protein]-C-terminal Gly-Gly + 2-[(2R,5Z)-2-carboxy-4-methylthiazol-5(2H)-ylidene]ethyl phosphate + 2 H2O + H(+). It functions in the pathway cofactor biosynthesis; thiamine diphosphate biosynthesis. Its function is as follows. Catalyzes the rearrangement of 1-deoxy-D-xylulose 5-phosphate (DXP) to produce the thiazole phosphate moiety of thiamine. Sulfur is provided by the thiocarboxylate moiety of the carrier protein ThiS. In vitro, sulfur can be provided by H(2)S. This is Thiazole synthase from Bordetella bronchiseptica (strain ATCC BAA-588 / NCTC 13252 / RB50) (Alcaligenes bronchisepticus).